The sequence spans 85 residues: NAD(P)H-quinone oxidoreductase subunit L (85 aa).

Helical transmembrane passes span 17 to 37 and 54 to 74; these read IVAV…PGFV and AFMY…SPFL.

The protein belongs to the complex I NdhL subunit family. As to quaternary structure, NDH-1 can be composed of about 15 different subunits; different subcomplexes with different compositions have been identified which probably have different functions.

The protein resides in the cellular thylakoid membrane. The enzyme catalyses a plastoquinone + NADH + (n+1) H(+)(in) = a plastoquinol + NAD(+) + n H(+)(out). It carries out the reaction a plastoquinone + NADPH + (n+1) H(+)(in) = a plastoquinol + NADP(+) + n H(+)(out). Its function is as follows. NDH-1 shuttles electrons from an unknown electron donor, via FMN and iron-sulfur (Fe-S) centers, to quinones in the respiratory and/or the photosynthetic chain. The immediate electron acceptor for the enzyme in this species is believed to be plastoquinone. Couples the redox reaction to proton translocation, and thus conserves the redox energy in a proton gradient. Cyanobacterial NDH-1 also plays a role in inorganic carbon-concentration. This chain is NAD(P)H-quinone oxidoreductase subunit L, found in Crocosphaera subtropica (strain ATCC 51142 / BH68) (Cyanothece sp. (strain ATCC 51142)).